An 840-amino-acid chain; its full sequence is Cancer-associated gene 1 protein homolog (840 aa).

A coiled-coil region spans residues 303–559 (MALNEILKKL…HVARSEEQNY (257 aa)). Residues 800–840 (EDLIRKPREKARKPRSKSLENHPKSMTMMPAVFKENRNDLD) form a disordered region. The segment covering 806 to 815 (PREKARKPRS) has biased composition (basic residues).

This Macaca fascicularis (Crab-eating macaque) protein is Cancer-associated gene 1 protein homolog (CAGE1).